Reading from the N-terminus, the 120-residue chain is Movement protein TGB2 (120 aa).

At Met-1–Ser-16 the chain is on the cytoplasmic side. A helical transmembrane segment spans residues Leu-17–Leu-37. Residues Arg-38 to Ser-76 are Lumenal-facing. A helical membrane pass occupies residues Asn-77–Phe-97. The Cytoplasmic portion of the chain corresponds to Gln-98–Val-120.

It belongs to the Tymovirales TGBp2 protein family.

It localises to the host endoplasmic reticulum membrane. Functionally, plays a role in viral cell-to-cell propagation, by facilitating genome transport to neighboring plant cells through plasmosdesmata,. The sequence is that of Movement protein TGB2 (ORF3) from Lolium latent virus (isolate Lolium/USA/US1/-) (LoLV).